The sequence spans 309 residues: MTMRASLAIENFLEMMSAERGAAQNTLESYRRDLEAAAEELAAKGVNLAEAETGHIRMTLDTMAAQGFAPTSQARRLSALRQFFRFLYSEGFRQDDPTGILDAPKKQKPLPKIMSVENVGRLLDRAALEANEAAEPGERIKALRLHALLETLYATGLRVSELVGLPVTVARTDHRFLLVRGKGSKDRMVPLSRKARDALQKFLTLRDSLPGSDDNPWLFPAFSESGHLARQVFARELKGLAARAGLAASSVSPHVLRHAFASHLLQNGADLRTVQQLLGHADISTTQIYTHVLEERLHKLVSEHHPLAD.

The Core-binding (CB) domain maps to 3–88 (MRASLAIENF…ALRQFFRFLY (86 aa)). Residues 109–302 (PLPKIMSVEN…LEERLHKLVS (194 aa)) form the Tyr recombinase domain. Residues arginine 158, lysine 182, histidine 254, arginine 257, and histidine 280 contribute to the active site. The active-site O-(3'-phospho-DNA)-tyrosine intermediate is the tyrosine 289.

It belongs to the 'phage' integrase family. XerD subfamily. Forms a cyclic heterotetrameric complex composed of two molecules of XerC and two molecules of XerD.

It is found in the cytoplasm. In terms of biological role, site-specific tyrosine recombinase, which acts by catalyzing the cutting and rejoining of the recombining DNA molecules. The XerC-XerD complex is essential to convert dimers of the bacterial chromosome into monomers to permit their segregation at cell division. It also contributes to the segregational stability of plasmids. This Brucella suis biovar 1 (strain 1330) protein is Tyrosine recombinase XerD.